The following is a 393-amino-acid chain: FAD-dependent monooxygenase dbaB (393 aa).

Positions 1 to 23 (MTRTSPTLPVIILGAGMVGLTLA) are cleaved as a signal peptide. Residues Glu37 and Arg107 each coordinate FAD. Asn128 carries N-linked (GlcNAc...) asparagine glycosylation. The active site involves Tyr221. Asn233 carries N-linked (GlcNAc...) asparagine glycosylation. FAD is bound at residue Asp320.

The protein belongs to the paxM FAD-dependent monooxygenase family. FAD is required as a cofactor.

The protein operates within secondary metabolite biosynthesis. In terms of biological role, FAD-dependent monooxygenase; part of the gene cluster that mediates the biosynthesis of the antibiotic 2,4-dihydroxy-3-methyl-6-(2-oxopropyl)benzaldehyde (DHMBA) and its derivatives. The direct non-reducing polyketide synthase dbaI product is 2,4-dihydroxy-3-methyl-6-(2-oxopropyl)benzaldehyde (DHMBA), produced by condensation of one acetyl-CoA starter unit with 4 malonyl-CoA units and one methylation step. The FAD-dependent monooxygenase dbaH is responsible for the synthesis of yellow pigments derived from the oxidation of DHMBA. The roles of dbaB, C, E and F have still to be determined. The chain is FAD-dependent monooxygenase dbaB from Emericella nidulans (strain FGSC A4 / ATCC 38163 / CBS 112.46 / NRRL 194 / M139) (Aspergillus nidulans).